The following is a 319-amino-acid chain: Lipoyl synthase (319 aa).

7 residues coordinate [4Fe-4S] cluster: Cys-61, Cys-66, Cys-72, Cys-87, Cys-91, Cys-94, and Ser-300. One can recognise a Radical SAM core domain in the interval 73–289 (WDKKHATFMI…ESVAYSKGFL (217 aa)).

This sequence belongs to the radical SAM superfamily. Lipoyl synthase family. Requires [4Fe-4S] cluster as cofactor.

The protein localises to the cytoplasm. The catalysed reaction is [[Fe-S] cluster scaffold protein carrying a second [4Fe-4S](2+) cluster] + N(6)-octanoyl-L-lysyl-[protein] + 2 oxidized [2Fe-2S]-[ferredoxin] + 2 S-adenosyl-L-methionine + 4 H(+) = [[Fe-S] cluster scaffold protein] + N(6)-[(R)-dihydrolipoyl]-L-lysyl-[protein] + 4 Fe(3+) + 2 hydrogen sulfide + 2 5'-deoxyadenosine + 2 L-methionine + 2 reduced [2Fe-2S]-[ferredoxin]. Its pathway is protein modification; protein lipoylation via endogenous pathway; protein N(6)-(lipoyl)lysine from octanoyl-[acyl-carrier-protein]: step 2/2. Functionally, catalyzes the radical-mediated insertion of two sulfur atoms into the C-6 and C-8 positions of the octanoyl moiety bound to the lipoyl domains of lipoate-dependent enzymes, thereby converting the octanoylated domains into lipoylated derivatives. The polypeptide is Lipoyl synthase (Rhodopseudomonas palustris (strain BisB18)).